The following is a 252-amino-acid chain: Small ribosomal subunit protein uS2 (252 aa).

Belongs to the universal ribosomal protein uS2 family. As to quaternary structure, component of the small ribosomal subunit. Mature ribosomes consist of a small (40S) and a large (60S) subunit. The 40S subunit contains about 33 different proteins and 1 molecule of RNA (18S). The 60S subunit contains about 49 different proteins and 3 molecules of RNA (25S, 5.8S and 5S). Interacts with RPS21.

The protein localises to the cytoplasm. In terms of biological role, required for the assembly and/or stability of the 40S ribosomal subunit. Required for the processing of the 20S rRNA-precursor to mature 18S rRNA in a late step of the maturation of 40S ribosomal subunits. In Encephalitozoon cuniculi (strain GB-M1) (Microsporidian parasite), this protein is Small ribosomal subunit protein uS2.